We begin with the raw amino-acid sequence, 215 residues long: Pyridoxine/pyridoxamine 5'-phosphate oxidase (215 aa).

Residues 9 to 12 (RRDY) and Lys69 each bind substrate. Residues 64-69 (RVLLLK), 79-80 (FS), Lys86, and Gln108 each bind FMN. Substrate is bound by residues Tyr126, Arg130, and Ser134. FMN-binding positions include 143-144 (QS) and Trp188. Position 194 to 196 (194 to 196 (RLH)) interacts with substrate. An FMN-binding site is contributed by Arg198.

Belongs to the pyridoxamine 5'-phosphate oxidase family. Homodimer. It depends on FMN as a cofactor.

The catalysed reaction is pyridoxamine 5'-phosphate + O2 + H2O = pyridoxal 5'-phosphate + H2O2 + NH4(+). The enzyme catalyses pyridoxine 5'-phosphate + O2 = pyridoxal 5'-phosphate + H2O2. It functions in the pathway cofactor metabolism; pyridoxal 5'-phosphate salvage; pyridoxal 5'-phosphate from pyridoxamine 5'-phosphate: step 1/1. The protein operates within cofactor metabolism; pyridoxal 5'-phosphate salvage; pyridoxal 5'-phosphate from pyridoxine 5'-phosphate: step 1/1. Its function is as follows. Catalyzes the oxidation of either pyridoxine 5'-phosphate (PNP) or pyridoxamine 5'-phosphate (PMP) into pyridoxal 5'-phosphate (PLP). This chain is Pyridoxine/pyridoxamine 5'-phosphate oxidase, found in Ectopseudomonas mendocina (strain ymp) (Pseudomonas mendocina).